The sequence spans 126 residues: Large ribosomal subunit protein uL22 (126 aa).

It belongs to the universal ribosomal protein uL22 family. In terms of assembly, part of the 50S ribosomal subunit.

In terms of biological role, this protein binds specifically to 23S rRNA; its binding is stimulated by other ribosomal proteins, e.g. L4, L17, and L20. It is important during the early stages of 50S assembly. It makes multiple contacts with different domains of the 23S rRNA in the assembled 50S subunit and ribosome. Functionally, the globular domain of the protein is located near the polypeptide exit tunnel on the outside of the subunit, while an extended beta-hairpin is found that lines the wall of the exit tunnel in the center of the 70S ribosome. The sequence is that of Large ribosomal subunit protein uL22 from Paracoccus denitrificans (strain Pd 1222).